The chain runs to 948 residues: Peroxisomal ATPase pex6 (948 aa).

Residue glycine 695 to threonine 702 participates in ATP binding.

This sequence belongs to the AAA ATPase family. Interacts with PEX1; forming the PEX1-PEX6 AAA ATPase complex, which is composed of a heterohexamer formed by a trimer of PEX1-PEX6 dimers.

Its subcellular location is the cytoplasm. It is found in the cytosol. It localises to the peroxisome membrane. The catalysed reaction is ATP + H2O = ADP + phosphate + H(+). Its function is as follows. Component of the PEX1-PEX6 AAA ATPase complex, a protein dislocase complex that mediates the ATP-dependent extraction of the PEX5 receptor from peroxisomal membranes, an essential step for PEX5 recycling. Specifically recognizes PEX5 monoubiquitinated at 'Cys-6', and pulls it out of the peroxisome lumen through the PEX2-PEX10-PEX12 retrotranslocation channel. Extraction by the PEX1-PEX6 AAA ATPase complex is accompanied by unfolding of the TPR repeats and release of bound cargo from PEX5. The chain is Peroxisomal ATPase pex6 (pex6) from Schizosaccharomyces pombe (strain 972 / ATCC 24843) (Fission yeast).